The following is a 121-amino-acid chain: Dihydroneopterin aldolase (121 aa).

Residues Glu-16 and Met-111 each contribute to the substrate site.

This sequence belongs to the archaeal dihydroneopterin aldolase family. As to quaternary structure, homotetramer.

It catalyses the reaction 7,8-dihydroneopterin = 6-hydroxymethyl-7,8-dihydropterin + glycolaldehyde. Its pathway is cofactor biosynthesis; 5,6,7,8-tetrahydromethanopterin biosynthesis. Catalyzes the conversion of 7,8-dihydroneopterin (H2Neo) to 6-hydroxymethyl-7,8-dihydropterin (6-HMD). In Methanopyrus kandleri (strain AV19 / DSM 6324 / JCM 9639 / NBRC 100938), this protein is Dihydroneopterin aldolase.